We begin with the raw amino-acid sequence, 295 residues long: Protease HtpX (295 aa).

Transmembrane regions (helical) follow at residues 4–24 and 41–61; these read ILLF…TLSL and SSLL…SLFI. His147 serves as a coordination point for Zn(2+). Glu148 is a catalytic residue. Zn(2+) is bound at residue His151. The next 2 helical transmembrane spans lie at 158-178 and 199-219; these read VTLA…ARII and VATI…VMWF. A Zn(2+)-binding site is contributed by Glu224.

Belongs to the peptidase M48B family. Zn(2+) serves as cofactor.

The protein localises to the cell inner membrane. This Pseudomonas putida (strain W619) protein is Protease HtpX.